We begin with the raw amino-acid sequence, 1083 residues long: Glutamate receptor-interacting protein 2 (1083 aa).

PDZ domains are found at residues 58–141 (IVEL…EYEL), 156–244 (TIEI…EYDV), and 258–342 (LVEI…LPAH). A compositionally biased stretch (polar residues) spans 408-422 (AGTPGFSSQNSNTLP). Positions 408-460 (AGTPGFSSQNSNTLPRTVHPMSPRTTMNRRRQKRKDHKSSLSLASSTVGPGGQ) are disordered. The segment covering 434 to 444 (MNRRRQKRKDH) has biased composition (basic residues). PDZ domains lie at 468–555 (EIIL…EIEF), 569–652 (HVKL…RKDE), and 667–749 (TVEL…KKQT). Disordered stretches follow at residues 754 to 783 (PQRL…LSEI), 853 to 872 (NEQD…GLET), and 936 to 965 (GSHH…VHNA). Residues 774–783 (SQKTSKLSEI) show a composition bias toward polar residues. A compositionally biased stretch (basic and acidic residues) spans 945–963 (PKKENKLSQDARSKKEEVH). A PDZ 7 domain is found at 974-1056 (KVTVQKDMDT…RLDLVISRGL (83 aa)).

This sequence belongs to the GRIP2 family. As to expression, enriched in the mitochondrial cloud of stage I oocytes, before becoming concentrated at the tip of the vegetal cortex in stage II oocytes. Expression becomes localized to the germ plasm of stage III-IV oocytes and early cleavage stages. At the tailbud stage, localizes to the migrating primordial germ cells (PGCs) until PGC migration is complete (stage 40), at which point expression disappears. In the adult, expressed in the brain, ovary, eye, muscle, spinal cord and very weakly in adipocytes.

It localises to the cytoplasm. Plays an important role in primordial germ cell (PGC) maintenance and efficiency of PGC migration. The sequence is that of Glutamate receptor-interacting protein 2 from Xenopus laevis (African clawed frog).